Consider the following 313-residue polypeptide: Probable cytochrome c oxidase subunit 2 (313 aa).

The 47-residue stretch at 5–51 folds into the RPE1 insert domain; it reads RYWSKQSYKKLKVDQEHNTTEYTNVCNSTSLGSTYTLPLKMELWKIY. Helical transmembrane passes span 39-59, 94-114, and 131-151; these read YTLP…YFLI, LLYI…FVCI, and LLIE…IAVP. Residues His-233, Cys-268, Cys-272, and His-276 each coordinate Cu cation.

The protein belongs to the cytochrome c oxidase subunit 2 family. It depends on Cu cation as a cofactor. Heme is required as a cofactor.

The protein localises to the cell membrane. It carries out the reaction 4 Fe(II)-[cytochrome c] + O2 + 8 H(+)(in) = 4 Fe(III)-[cytochrome c] + 2 H2O + 4 H(+)(out). Its function is as follows. Subunits I and II form the functional core of the enzyme complex. Electrons originating in cytochrome c are transferred via heme a and Cu(A) to the binuclear center formed by heme a3 and Cu(B). The sequence is that of Probable cytochrome c oxidase subunit 2 (ctaC) from Rickettsia prowazekii (strain Madrid E).